The primary structure comprises 1187 residues: MDSSCFLVYRIFRFRKRNKNISSSLSSSSPPSSLSQNWLHPVFLSFRGEDVRKGLLSHIQKEFQRNGITPFIDNEMKRGGSIGPELLQAIRGSKIAIILLSRNYGSSKWCLDELVEIMKCREELGQTVMTVFYDVDPSDVRKQKGDFGKVFKKTCVGRPEEMVQRWKQALTSAANILGEDSRNWENEADMIIKISKDVSDVLSFTPSKDFDEFVGIEAHTTEITSLLQLDLEEVRMIGIWGPAGIGKTTISRVLYNKLFHQFQLGAIIDNIKVRYPRPCHDEYSAKLQLQKELLSQMINQKDMVVPHLGVAQERLKDKKVLLVLDDVDGLVQLDAMAKDVQWFGLGSRIIVVTQDLKLLKAHGIKYIYKVDFPTSDEALEIFCMYAFGEKSPKVGFEQIARTVTTLAGKLPLGLRVMGSYLRRMSKQEWAKSIPRLRTSLDDDIESVLKFSYNSLAEQEKDLFLHITCFFRRERIETLEVFLAKKSVDMRQGLQILADKSLLSLNLGNIEMHNLLVQLGLDIVRKQSIHKPGKRQFLVDTEDICEVLTDDTGTRTLIGIDLELSGVIEGVINISERAFERMCNLQFLRFHHPYGDRCHDILYLPQGLSHISRKLRLLHWERYPLTCLPPKFNPEFLVKINMRDSMLEKLWDGNEPIRNLKWMDLSFCVNLKELPDFSTATNLQELRLINCLSLVELPSSIGNATNLLELDLIDCSSLVKLPSSIGNLTNLKKLFLNRCSSLVKLPSSFGNVTSLKELNLSGCSSLLEIPSSIGNIVNLKKVYADGCSSLVQLPSSIGNNTNLKELHLLNCSSLMECPSSMLNLTRLEDLNLSGCLSLVKLPSIGNVINLQSLYLSDCSSLMELPFTIENATNLDTLYLDGCSNLLELPSSIWNITNLQSLYLNGCSSLKELPSLVENAINLQSLSLMKCSSLVELPSSIWRISNLSYLDVSNCSSLLELNLVSHPVVPDSLILDAGDCESLVQRLDCFFQNPKIVLNFANCFKLNQEARDLIIQTSACRNAILPGEKVPAYFTYRATGDSLTVKLNQKYLLQSLRFKACLLLVEGQNKWPNWGMNLVTSREPDGHIVLYTPSSHLQGPLLMENLYTFEFELVVTSSEFVLEFRADRYKCALGRFDKFGVHVVWCHLDQYESKSPSCKPFWRDFPIVISNGQNILDAILKTPMPSINQ.

The TIR domain maps to 38–202 (WLHPVFLSFR…KISKDVSDVL (165 aa)). Glu-113 is an active-site residue. An NB-ARC domain is found at 217–478 (EAHTTEITSL…FFRRERIETL (262 aa)). 14 LRR repeats span residues 498 to 522 (DKSLLSLNLGNIEMHNLLVQLGLDI), 611 to 633 (SRKLRLLHWERYPLTCLPPKFNP), 635 to 658 (FLVKINMRDSMLEKLWDGNEPIRN), 660 to 679 (KWMDLSFCVNLKELPDFSTA), 680 to 703 (TNLQELRLINCLSLVELPSSIGNA), 704 to 727 (TNLLELDLIDCSSLVKLPSSIGNL), 728 to 750 (TNLKKLFLNRCSSLVKLPSSFGN), 752 to 775 (TSLKELNLSGCSSLLEIPSSIGNI), 799 to 823 (NTNLKELHLLNCSSLMECPSSMLNL), 824 to 849 (TRLEDLNLSGCLSLVKLPSIGNVINL), 870 to 894 (ATNLDTLYLDGCSNLLELPSSIWNI), 895 to 918 (TNLQSLYLNGCSSLKELPSLVENA), 920 to 942 (NLQSLSLMKCSSLVELPSSIWRI), and 953 to 974 (CSSLLELNLVSHPVVPDSLILD).

It carries out the reaction NAD(+) + H2O = ADP-D-ribose + nicotinamide + H(+). Functionally, TIR-NB-LRR receptor-like protein that contributes to disease resistance induced by the Pseudomonas syringae type III effector AvrB. Acts additively with RPM1 to generate a full disease resistance response to P.syringae expressing this type III effector. The chain is Disease resistance protein TAO1 from Arabidopsis thaliana (Mouse-ear cress).